Here is a 126-residue protein sequence, read N- to C-terminus: Cystatin-like protein (126 aa).

The Secondary area of contact signature appears at 72–76 (QVVAG). A disulfide bond links C94 and C115.

It belongs to the cystatin family.

The sequence is that of Cystatin-like protein (Cys) from Drosophila melanogaster (Fruit fly).